The following is a 141-amino-acid chain: MILGIGNDLVDVRRIERTIERFGDRFLDRVFTEAERRRAERRSAAGPHSPRAATYAKRFAAKEACAKALGTGLNKGVYWRDMGVVNLPGGRPTLALTGGALERLRQITPPGMVAEIHLTLTDELPIAQAIVLISAVPAPQP.

The Mg(2+) site is built by D8 and E63.

The protein belongs to the P-Pant transferase superfamily. AcpS family. It depends on Mg(2+) as a cofactor.

The protein localises to the cytoplasm. It carries out the reaction apo-[ACP] + CoA = holo-[ACP] + adenosine 3',5'-bisphosphate + H(+). Transfers the 4'-phosphopantetheine moiety from coenzyme A to a Ser of acyl-carrier-protein. The chain is Holo-[acyl-carrier-protein] synthase from Rhodospirillum centenum (strain ATCC 51521 / SW).